We begin with the raw amino-acid sequence, 389 residues long: Probable nitrate transporter NarT (389 aa).

Helical transmembrane passes span 14–34, 45–65, 69–89, 97–117, 139–159, 161–181, 211–231, 246–266, 268–288, 294–314, 331–351, and 353–373; these read TLSLVVGFMAWSIIAPLMPFI, ISIILAIPVILGSVLRVPFGY, IVGAKWVFFTSFIVLLFPIFF, GMLMASGFFLGVGGAIFSVGV, GNIGTAVSSFLAPPIAGIIGW, TTVRSYLIIIALFALIMFIFG, WYFITFGAFVAFGIFLPNYLV, GVFIALATFLRPIGGILGDKF, AVKVLMIDFVVMIIGAIILGI, LFTVGCLTISICAGIGNGLIF, IVSMMGGLGGFFPPLVITYVA, and LTGSSHLAFIFLAVFGCIALF.

Belongs to the major facilitator superfamily. Nitrate/nitrite porter (TC 2.A.1.8) family.

It is found in the cell membrane. Functionally, probably required for nitrate uptake under anoxic conditions. Also possibly involved in excretion of nitrite produced by the dissimilatory reduction of nitrate. This chain is Probable nitrate transporter NarT (narT), found in Staphylococcus aureus (strain USA300).